The sequence spans 293 residues: Short-chain dehydrogenase/reductase PhomF (293 aa).

Residues isoleucine 31 and asparagine 102 each coordinate NADP(+). The active-site Proton donor is serine 175. Residues tyrosine 190, lysine 194, and serine 225 each coordinate NADP(+). Catalysis depends on tyrosine 190, which acts as the Proton acceptor. Residue lysine 194 is the Lowers pKa of active site Tyr of the active site.

The protein belongs to the short-chain dehydrogenases/reductases (SDR) family.

Its function is as follows. Short-chain dehydrogenase/reductase; part of the gene cluster that mediates the biosynthesis of the phomopsins, a group of hexapeptide mycotoxins which infects lupins and causes lupinosis disease in livestock. The role of phomF within the phomopsins biosynthesis pathway has still to be determined. The pathway starts with the processing of the precursor phomA by several endopeptidases including kexin proteases as well as the cluster-specific S41 family peptidase phomP1 and the oligopeptidase phomG to produce 10 identical copies of the hexapeptide Tyr-Val-Ile-Pro-Ile-Asp. After being excised from the precursor peptide, the core peptides are cyclized and modified post-translationally by enzymes encoded within the gene cluster. The timing and order of proteolysis of the phomA precursor and PTMs are still unknown. Two tyrosinase-like enzymes, phomQ1 and phomQ2, catalyze the chlorination and hydroxylation of Tyr, respectively. PhomYb, is proposed to be involved in the construction of the macrocyclic structure. The other 4 ustYa family proteins may be involved in PTMs that generate the unique structure of phomopsin A. PhomYa is required for the hydroxylation of C-beta of Tyr. PhomYc, phomYd, and phomYe are responsible for the biosynthesis of 2,3-dehydroisoleucine (dIle), 2,3-dehydroaspartic acid (dAsp), and 3,4-dehydroproline (dPro), respectively. While dIle formation by phomYc is indispensable for the installation of dAsp by phomYd, the order of the other PTMs have not been elucidated yet. Most of the biosynthetic enzymes likely have broad substrate specificity, and thus, there might be a metabolic grid from a precursor to phomopsin A. The enzyme(s) responsible for the biosynthesis of 3,4-dehydrovaline (dVal) have also not been identified yet. Finally, phomM acts as an S-adenosylmethionine-dependent alpha-N-methyltransferase that catalyzes two successive N-methylation reactions, converting N-desmethyl-phomopsin A to phomopsin A and phomopsin A further to an N,N-dimethylated congener called phomopsin E. This chain is Short-chain dehydrogenase/reductase PhomF, found in Diaporthe leptostromiformis (Lupinosis disease fungus).